A 697-amino-acid polypeptide reads, in one-letter code: Histone deacetylase HOS3 (697 aa).

A histone deacetylase region spans residues 40-440 (AKAVVVLSPY…LIGLQNQDWV (401 aa)). Residue His196 is part of the active site. The segment at 525–573 (IRSHRSNASPEKELHENKPRSTEKQEQREIRSDTKVKQLSSNNRAAETQ) is disordered. Residues 534 to 560 (PEKELHENKPRSTEKQEQREIRSDTKV) show a composition bias toward basic and acidic residues. Residues 561 to 573 (KQLSSNNRAAETQ) are compositionally biased toward polar residues. 4 positions are modified to phosphoserine: Ser582, Ser583, Ser613, and Ser629. Positions 625-638 (GDEDSDHELKEKNW) are enriched in basic and acidic residues. The interval 625–697 (GDEDSDHELK…KHTTRSGGRW (73 aa)) is disordered. Residues 665 to 674 (QPQNANTPTY) show a composition bias toward polar residues.

This sequence belongs to the histone deacetylase family. HD type 1 subfamily. In terms of assembly, homodimer.

It localises to the nucleus. The catalysed reaction is N(6)-acetyl-L-lysyl-[histone] + H2O = L-lysyl-[histone] + acetate. Functionally, responsible for the deacetylation of lysine residues on the N-terminal part of the core histones (H2A, H2B, H3 and H4). Histone deacetylation gives a tag for epigenetic repression and plays an important role in transcriptional regulation, cell cycle progression and developmental events. Histone deacetylases act via the formation of large multiprotein complexes. This chain is Histone deacetylase HOS3 (HOS3), found in Saccharomyces cerevisiae (strain ATCC 204508 / S288c) (Baker's yeast).